The primary structure comprises 833 residues: DNA ligase (833 aa).

Residues 35–39 (DVEYD), 84–85 (SL), and Glu-115 each bind NAD(+). Lys-117 (N6-AMP-lysine intermediate) is an active-site residue. Positions 138, 175, 292, and 316 each coordinate NAD(+). 4 residues coordinate Zn(2+): Cys-410, Cys-413, Cys-428, and Cys-434. Residues 750–833 (VQAGPLDGQT…AFLSEHGQAV (84 aa)) enclose the BRCT domain.

The protein belongs to the NAD-dependent DNA ligase family. LigA subfamily. The cofactor is Mg(2+). Mn(2+) is required as a cofactor.

The catalysed reaction is NAD(+) + (deoxyribonucleotide)n-3'-hydroxyl + 5'-phospho-(deoxyribonucleotide)m = (deoxyribonucleotide)n+m + AMP + beta-nicotinamide D-nucleotide.. In terms of biological role, DNA ligase that catalyzes the formation of phosphodiester linkages between 5'-phosphoryl and 3'-hydroxyl groups in double-stranded DNA using NAD as a coenzyme and as the energy source for the reaction. It is essential for DNA replication and repair of damaged DNA. This is DNA ligase from Xanthomonas campestris pv. campestris (strain 8004).